The sequence spans 357 residues: Phenylalanine--tRNA ligase alpha subunit (357 aa).

Glutamate 257 provides a ligand contact to Mg(2+).

Belongs to the class-II aminoacyl-tRNA synthetase family. Phe-tRNA synthetase alpha subunit type 1 subfamily. Tetramer of two alpha and two beta subunits. The cofactor is Mg(2+).

It is found in the cytoplasm. The catalysed reaction is tRNA(Phe) + L-phenylalanine + ATP = L-phenylalanyl-tRNA(Phe) + AMP + diphosphate + H(+). The sequence is that of Phenylalanine--tRNA ligase alpha subunit from Ruegeria pomeroyi (strain ATCC 700808 / DSM 15171 / DSS-3) (Silicibacter pomeroyi).